The primary structure comprises 257 residues: Pyridoxine 5'-phosphate synthase (257 aa).

Asn-6 contacts 3-amino-2-oxopropyl phosphate. 8 to 9 (DH) lines the 1-deoxy-D-xylulose 5-phosphate pocket. Arg-17 serves as a coordination point for 3-amino-2-oxopropyl phosphate. His-41 acts as the Proton acceptor in catalysis. Arg-43 and His-48 together coordinate 1-deoxy-D-xylulose 5-phosphate. Residue Glu-68 is the Proton acceptor of the active site. Thr-98 contributes to the 1-deoxy-D-xylulose 5-phosphate binding site. His-210 serves as the catalytic Proton donor. 3-amino-2-oxopropyl phosphate is bound by residues Gly-211 and 232–233 (GQ).

This sequence belongs to the PNP synthase family. Homooctamer; tetramer of dimers.

The protein localises to the cytoplasm. It carries out the reaction 3-amino-2-oxopropyl phosphate + 1-deoxy-D-xylulose 5-phosphate = pyridoxine 5'-phosphate + phosphate + 2 H2O + H(+). It functions in the pathway cofactor biosynthesis; pyridoxine 5'-phosphate biosynthesis; pyridoxine 5'-phosphate from D-erythrose 4-phosphate: step 5/5. Catalyzes the complicated ring closure reaction between the two acyclic compounds 1-deoxy-D-xylulose-5-phosphate (DXP) and 3-amino-2-oxopropyl phosphate (1-amino-acetone-3-phosphate or AAP) to form pyridoxine 5'-phosphate (PNP) and inorganic phosphate. The polypeptide is Pyridoxine 5'-phosphate synthase (Campylobacter jejuni (strain RM1221)).